Here is a 297-residue protein sequence, read N- to C-terminus: Alpha-tubulin N-acetyltransferase 1 (297 aa).

The region spanning 1-184 (MDFPYDLNAL…NNFVVFAGFF (184 aa)) is the N-acetyltransferase domain. Acetyl-CoA contacts are provided by residues 118 to 131 (FYVT…GYGS) and 154 to 163 (SPKFLSFLEK). The tract at residues 226 to 297 (FVRPGGPPHS…SLNRSRLSFH (72 aa)) is disordered. Residues 230-240 (GGPPHSPPLLP) show a composition bias toward pro residues. Residues 241–264 (SSPQSRSLSVGSSPSRAPLRPAAA) show a composition bias toward low complexity. 2 stretches are compositionally biased toward polar residues: residues 266–278 (VLQQ…SPLN) and 286–297 (TSSLNRSRLSFH).

The protein belongs to the acetyltransferase ATAT1 family. In terms of assembly, monomer.

It localises to the cytoplasm. It is found in the membrane. The protein localises to the clathrin-coated pit. The protein resides in the cell junction. Its subcellular location is the focal adhesion. It localises to the cell projection. It is found in the axon. The protein localises to the cytoskeleton. The protein resides in the spindle. It catalyses the reaction L-lysyl-[alpha-tubulin] + acetyl-CoA = N(6)-acetyl-L-lysyl-[alpha-tubulin] + CoA + H(+). Its function is as follows. Specifically acetylates 'Lys-40' in alpha-tubulin on the lumenal side of microtubules. Promotes microtubule destabilization and accelerates microtubule dynamics; this activity may be independent of acetylation activity. Acetylates alpha-tubulin with a slow enzymatic rate, due to a catalytic site that is not optimized for acetyl transfer. Enters the microtubule through each end and diffuses quickly throughout the lumen of microtubules. Acetylates only long/old microtubules because of its slow acetylation rate since it does not have time to act on dynamically unstable microtubules before the enzyme is released. May be involved in neuron development. Acetylates alpha-tubulin in neurons, but not in cilia. This chain is Alpha-tubulin N-acetyltransferase 1, found in Danio rerio (Zebrafish).